The chain runs to 116 residues: U3-theraphotoxin-Lsp1a (116 aa).

A signal peptide spans 1–17 (MKLSTFIIMISLAVALA). Positions 18–50 (TWPSEHIEGSDSETKLNVELGPYALADRAEKGK) are excised as a propeptide.

The protein belongs to the neurotoxin 25 family. F7 subfamily. Post-translationally, contains 3 disulfide bonds. As to expression, expressed by the venom gland.

It localises to the secreted. This chain is U3-theraphotoxin-Lsp1a, found in Lasiodora sp. (strain IBSP 8539) (Brazilian salmon pink birdeater).